The primary structure comprises 270 residues: Photosystem I chlorophyll a/b-binding protein 6, chloroplastic (270 aa).

A chloroplast-targeting transit peptide spans M1 to T33. The segment at S16–T36 is disordered. Over residues R19 to T36 the composition is skewed to polar residues. W68 provides a ligand contact to chlorophyll b. Chlorophyll a contacts are provided by F88 and E107. R112 contributes to the chlorophyll b binding site. A helical transmembrane segment spans residues Y146–A164. 2 residues coordinate chlorophyll b: E165 and R168. Positions 221, 222, 225, 227, 239, and 254 each coordinate chlorophyll a. Residues L228–S244 traverse the membrane as a helical segment.

It belongs to the light-harvesting chlorophyll a/b-binding (LHC) protein family. In terms of assembly, the LHC complex consists of chlorophyll a-b binding proteins. Homodimer. Binds pigments. Element of the NAD(P)H dehydrogenase-photosystem I supercomplex (NDH-PSI). It depends on Binds at least 14 chlorophylls (8 Chl-a and 6 Chl-b) and carotenoids such as lutein and neoxanthin. as a cofactor. Post-translationally, photoregulated by reversible phosphorylation of its threonine residues.

The protein resides in the plastid. It localises to the chloroplast thylakoid membrane. Its function is as follows. The light-harvesting complex (LHC) functions as a light receptor, it captures and delivers excitation energy to photosystems with which it is closely associated. Seems involved in the function of the photosystem I in low light conditions, when other LHCA proteins are less abundant. Required, together with LHCA5, for the formation of a full-size NAD(P)H dehydrogenase-photosystem I supercomplex (NDH-PSI) that triggers cyclic and chlororespiratory electron transport in chloroplast thylakoids, especially under stress conditions (e.g. increased light intensity). This Arabidopsis thaliana (Mouse-ear cress) protein is Photosystem I chlorophyll a/b-binding protein 6, chloroplastic.